The chain runs to 129 residues: 3-oxo-4,17-pregnadiene-20-carboxyl-CoA hydratase beta subunit (129 aa).

This sequence belongs to the thioester dehydratase family. Heterodimer composed of ChsH1 and ChsH2. Two heterodimers combine to form a heterotetramer. The complex interacts with Ltp2 via the DUF35 C-terminal region of ChsH2. The ChsH1-ChsH2-Ltp2 protein complex is composed of two protomers that form a heterohexameric structure through the Ltp2 dimerization interface.

The catalysed reaction is 3-oxochola-4,17-dien-22-oyl-CoA + H2O = 17-hydroxy-3-oxochol-4-en-22-oyl-CoA. It catalyses the reaction (2E)-octenoyl-CoA + H2O = 3-hydroxyoctanoyl-CoA. It carries out the reaction (2E)-decenoyl-CoA + H2O = 3-hydroxydecanoyl-CoA. The protein operates within steroid metabolism; cholesterol degradation. With respect to regulation, in the absence of the Ltp2 aldolase, ChsH1/ChsH2 can hydrate only about 30% of the 3-OPDC-CoA substrate. Complete turnover requires the presence of Ltp2. Its function is as follows. Involved in cholesterol side chain degradation. Catalyzes the hydration of 3-oxo-4,17-pregnadiene-20-carboxyl-CoA (3-OPDC-CoA) to form 17-hydroxy-3-oxo-4-pregnene-20-carboxyl-CoA (17-HOPC-CoA), in the modified beta-oxidation pathway for cholesterol side chain degradation. Can also use octenoyl-CoA and decenoyl-CoA, with lower efficiency. This is 3-oxo-4,17-pregnadiene-20-carboxyl-CoA hydratase beta subunit from Mycobacterium tuberculosis (strain ATCC 25618 / H37Rv).